Reading from the N-terminus, the 79-residue chain is Acyl carrier protein (79 aa).

Residues 3–78 (QEILEKVCSI…DAVKFIEEKK (76 aa)) enclose the Carrier domain. Ser-38 is modified (O-(pantetheine 4'-phosphoryl)serine).

This sequence belongs to the acyl carrier protein (ACP) family. Post-translationally, 4'-phosphopantetheine is transferred from CoA to a specific serine of apo-ACP by AcpS. This modification is essential for activity because fatty acids are bound in thioester linkage to the sulfhydryl of the prosthetic group.

Its subcellular location is the cytoplasm. The protein operates within lipid metabolism; fatty acid biosynthesis. Its function is as follows. Carrier of the growing fatty acid chain in fatty acid biosynthesis. This chain is Acyl carrier protein, found in Prochlorococcus marinus (strain MIT 9312).